The sequence spans 88 residues: UPF0297 protein SGO_2042 (88 aa).

Belongs to the UPF0297 family.

The chain is UPF0297 protein SGO_2042 from Streptococcus gordonii (strain Challis / ATCC 35105 / BCRC 15272 / CH1 / DL1 / V288).